Consider the following 82-residue polypeptide: Turripeptide Gsg9.1 (82 aa).

An N-terminal signal peptide occupies residues 1–23; the sequence is MMAKLMITVMTVFFLSLQQGADG. Residues 24–46 constitute a propeptide that is removed on maturation; that stretch reads LFERWRKNQMAASRIMGNLITAR. 4-hydroxyproline occurs at positions 49 and 50. Intrachain disulfides connect Cys-53–Cys-68, Cys-58–Cys-72, and Cys-64–Cys-79. Residues Glu-60 and Glu-63 each carry the 4-carboxyglutamate modification.

The protein belongs to the Pg turripeptide superfamily. Expressed by the venom duct.

Its subcellular location is the secreted. The sequence is that of Turripeptide Gsg9.1 from Gemmula sogodensis (Gem-turris).